Consider the following 29-residue polypeptide: Trypsin inhibitor 1 (29 aa).

3 disulfides stabilise this stretch: Cys3–Cys20, Cys10–Cys22, and Cys16–Cys28.

Belongs to the protease inhibitor I7 (squash-type serine protease inhibitor) family.

It is found in the secreted. In terms of biological role, inhibits trypsin. The polypeptide is Trypsin inhibitor 1 (Cucurbita maxima (Pumpkin)).